Consider the following 246-residue polypeptide: PF03932 family protein CutC (246 aa).

It belongs to the CutC family.

The protein localises to the cytoplasm. In Treponema denticola (strain ATCC 35405 / DSM 14222 / CIP 103919 / JCM 8153 / KCTC 15104), this protein is PF03932 family protein CutC.